Reading from the N-terminus, the 289-residue chain is Shikimate dehydrogenase (NADP(+)) (289 aa).

Residues 20-22 and serine 67 each bind shikimate; that span reads SIS. Lysine 71 serves as the catalytic Proton acceptor. Shikimate contacts are provided by asparagine 92 and aspartate 107. Residues 132–136 and valine 230 each bind NADP(+); that span reads GGGGA. Tyrosine 232 serves as a coordination point for shikimate. Glycine 253 serves as a coordination point for NADP(+).

This sequence belongs to the shikimate dehydrogenase family. In terms of assembly, homodimer.

The enzyme catalyses shikimate + NADP(+) = 3-dehydroshikimate + NADPH + H(+). Its pathway is metabolic intermediate biosynthesis; chorismate biosynthesis; chorismate from D-erythrose 4-phosphate and phosphoenolpyruvate: step 4/7. In terms of biological role, involved in the biosynthesis of the chorismate, which leads to the biosynthesis of aromatic amino acids. Catalyzes the reversible NADPH linked reduction of 3-dehydroshikimate (DHSA) to yield shikimate (SA). This is Shikimate dehydrogenase (NADP(+)) from Streptococcus mutans serotype c (strain ATCC 700610 / UA159).